The primary structure comprises 652 residues: DNA mismatch repair protein MutL (652 aa).

Belongs to the DNA mismatch repair MutL/HexB family.

Functionally, this protein is involved in the repair of mismatches in DNA. It is required for dam-dependent methyl-directed DNA mismatch repair. May act as a 'molecular matchmaker', a protein that promotes the formation of a stable complex between two or more DNA-binding proteins in an ATP-dependent manner without itself being part of a final effector complex. This chain is DNA mismatch repair protein MutL, found in Aliivibrio salmonicida (strain LFI1238) (Vibrio salmonicida (strain LFI1238)).